An 851-amino-acid polypeptide reads, in one-letter code: Putative cell signaling protein (851 aa).

Basic and acidic residues-rich tracts occupy residues 165 to 176 (KLNEQDGKKSDN), 196 to 223 (DQAR…EETK), and 767 to 781 (SEER…LSHD). 2 disordered regions span residues 165 to 223 (KLNE…EETK) and 714 to 781 (DDSE…LSHD).

Palmitoylated.

This Schizosaccharomyces pombe (strain 972 / ATCC 24843) (Fission yeast) protein is Putative cell signaling protein.